We begin with the raw amino-acid sequence, 418 residues long: Glutamyl-tRNA reductase (418 aa).

Residues 49 to 52, serine 109, 114 to 116, and glutamine 120 each bind substrate; these read TCNR and EPQ. The active-site Nucleophile is cysteine 50. Position 189–194 (189–194) interacts with NADP(+); that stretch reads GAGETI.

The protein belongs to the glutamyl-tRNA reductase family. In terms of assembly, homodimer.

The catalysed reaction is (S)-4-amino-5-oxopentanoate + tRNA(Glu) + NADP(+) = L-glutamyl-tRNA(Glu) + NADPH + H(+). The protein operates within porphyrin-containing compound metabolism; protoporphyrin-IX biosynthesis; 5-aminolevulinate from L-glutamyl-tRNA(Glu): step 1/2. Its function is as follows. Catalyzes the NADPH-dependent reduction of glutamyl-tRNA(Glu) to glutamate 1-semialdehyde (GSA). This is Glutamyl-tRNA reductase from Escherichia coli O127:H6 (strain E2348/69 / EPEC).